The sequence spans 707 residues: Nucleolin 2 (707 aa).

The segment at 1–446 (MGKSSKKSAV…TPASNQNQAT (446 aa)) is disordered. Composition is skewed to basic and acidic residues over residues 30 to 40 (RNAEDEIEKAV) and 47 to 60 (TVRE…EEAK). Composition is skewed to acidic residues over residues 75–85 (SSEEDSSESEE), 108–120 (SSDD…SSDD), and 144–153 (DSSDESLSDD). Residues 158 to 170 (KPAAPLKKPVALA) are compositionally biased toward low complexity. Acidic residues-rich tracts occupy residues 219-232 (DSSD…SDED), 248-263 (SESS…DDEA), and 271-287 (ESSD…SDSD). Over residues 300–311 (LTKDTKKGQSKD) the composition is skewed to basic and acidic residues. The segment covering 312-326 (ESEDSSDESSEESGD) has biased composition (acidic residues). Positions 336-347 (STTSGTTKPSPK) are enriched in low complexity. Over residues 355–370 (SDDESDEDDSSDESSD) the composition is skewed to acidic residues. The segment covering 376 to 394 (KQTQAKKQAPVAQESSSSD) has biased composition (low complexity). Residues 395-406 (ESSEEDSDMESD) are compositionally biased toward acidic residues. Over residues 407-417 (EPAKTPQKKET) the composition is skewed to basic and acidic residues. A compositionally biased stretch (polar residues) spans 420 to 429 (SVGSNKSATK). Residues 449–525 (KTLFVGNLPY…RPVRLDLARE (77 aa)) enclose the RRM 1 domain. Disordered stretches follow at residues 527–546 (GAYT…PAQS) and 629–707 (RPRP…GDDD). Positions 549-630 (NTIFIKGFDT…YSLYVDEARP (82 aa)) constitute an RRM 2 domain. Residues 657 to 681 (GRGDGSRGRGDRGRGRGFGRGDRGH) are compositionally biased toward basic and acidic residues.

It localises to the nucleus. It is found in the nucleolus. In terms of biological role, involved in pre-rRNA processing and ribosome assembly. This is Nucleolin 2 from Oryza sativa subsp. japonica (Rice).